A 229-amino-acid polypeptide reads, in one-letter code: Protein-L-isoaspartate O-methyltransferase (229 aa).

The active site involves Ser74.

It belongs to the methyltransferase superfamily. L-isoaspartyl/D-aspartyl protein methyltransferase family.

The protein resides in the cytoplasm. It catalyses the reaction [protein]-L-isoaspartate + S-adenosyl-L-methionine = [protein]-L-isoaspartate alpha-methyl ester + S-adenosyl-L-homocysteine. Catalyzes the methyl esterification of L-isoaspartyl residues in peptides and proteins that result from spontaneous decomposition of normal L-aspartyl and L-asparaginyl residues. It plays a role in the repair and/or degradation of damaged proteins. The chain is Protein-L-isoaspartate O-methyltransferase from Pelotomaculum thermopropionicum (strain DSM 13744 / JCM 10971 / SI).